The sequence spans 316 residues: F-box protein At4g09920 (316 aa).

In terms of domain architecture, F-box spans Met1 to Gly47.

In Arabidopsis thaliana (Mouse-ear cress), this protein is F-box protein At4g09920.